A 40-amino-acid chain; its full sequence is Putative protein FAM86JP (40 aa).

The segment at 1–40 (MPGAFSQNSSKRRAVLPRSHRVAGRGPAEAGCLPGAPAGS) is disordered. Basic residues predominate over residues 10-23 (SKRRAVLPRSHRVA).

This chain is Putative protein FAM86JP, found in Homo sapiens (Human).